Here is a 343-residue protein sequence, read N- to C-terminus: Vacuolar membrane protein Kpol_1003p17 (343 aa).

Positions threonine 45–leucine 65 are disordered. A helical membrane pass occupies residues phenylalanine 101–isoleucine 121. Residues glutamate 235–asparagine 343 are disordered. Residues glutamate 254–lysine 264 are compositionally biased toward polar residues. Residues lysine 269 to serine 280 show a composition bias toward basic and acidic residues. Residues arginine 281 to asparagine 290 show a composition bias toward basic residues.

This sequence belongs to the PRM5 family.

It localises to the vacuole membrane. The sequence is that of Vacuolar membrane protein Kpol_1003p17 from Vanderwaltozyma polyspora (strain ATCC 22028 / DSM 70294 / BCRC 21397 / CBS 2163 / NBRC 10782 / NRRL Y-8283 / UCD 57-17) (Kluyveromyces polysporus).